Here is a 32-residue protein sequence, read N- to C-terminus: Sodium channel neurotoxin BmK NT2 (32 aa).

Residues 2-32 form the LCN-type CS-alpha/beta domain; it reads RDAYIAKPENCVYHCAGNEGCNNLCTCNGAT.

As to expression, expressed by the venom gland.

It localises to the secreted. Functionally, alpha toxins bind voltage-independently at site-3 of sodium channels (Nav) and inhibit the inactivation of the activated channels, thereby blocking neuronal transmission. This toxin dose-dependently delays inactivation of voltage-gated sodium channels (Nav) (EC(50)=0.91 uM), and shifts the steady-state activation and inactivation to hyperpolarized direction. In addition, it dose-dependently alters calcium dynamics and increases phosphorylation of MAP kinases 1/3 (MAPK1/MAPK3) and cAMP-response element binding (CREB) proteins in neocortical neurons. This effect is eliminated by tetrodotoxin, a Nav blocker. The chain is Sodium channel neurotoxin BmK NT2 from Olivierus martensii (Manchurian scorpion).